The primary structure comprises 1899 residues: Protocadherin-15 (1899 aa).

A signal peptide spans 1–26; the sequence is MLQQFCLWKWLAVGIAVATILASSLA. At 27–1376 the chain is on the extracellular side; that stretch reads QNDEDCKLAR…AQAVGYTEGA (1350 aa). Residues Cys-32 and Cys-120 are joined by a disulfide bond. 11 Cadherin domains span residues 38 to 147, 148 to 265, 278 to 395, 396 to 509, 510 to 616, 617 to 717, 719 to 819, 820 to 926, 927 to 1035, 1037 to 1144, and 1145 to 1259; these read GPPA…SPQF, QQQR…GPMF, RPLT…KPYF, TKST…SPTF, SNIS…PPRF, PQLM…GPVF, MFLP…SPVF, TNAS…SPVF, SKTL…IPRF, QDEY…APVF, and TKKM…PPTL. The helical transmembrane segment at 1377–1397 threads the bilayer; that stretch reads LLALAVIIILCCMPAILIVMV. Residues 1398 to 1899 are Cytoplasmic-facing; that stretch reads SYRQRQAECA…KRFPSQSTAL (502 aa). 3 disordered regions span residues 1668–1687, 1700–1721, and 1734–1820; these read SPCL…VVEP, HDYP…SFRI, and TKGE…RREL. Composition is skewed to pro residues over residues 1706–1717 and 1743–1773; these read LSPPPTRKPTPP and PDPP…PPTL. The span at 1774 to 1791 shows a compositional bias: low complexity; sequence PLASVPSSSSLPSTQHLS. A compositionally biased stretch (pro residues) spans 1804 to 1814; it reads AVPPPAAVPEP.

In terms of tissue distribution, in the utricle, localizes to the distal region of the kinocilium and near the tips of the stereocilia.

The protein resides in the cell membrane. Functionally, calcium-dependent cell-adhesion protein. Required for inner ear neuroepithelial cell elaboration and cochlear function. Probably involved in the maintenance of normal retinal function. The sequence is that of Protocadherin-15 (Pcdh15) from Gallus gallus (Chicken).